Consider the following 28-residue polypeptide: Conotoxin de7b (28 aa).

3 disulfide bridges follow: Cys-2-Cys-18, Cys-9-Cys-22, and Cys-17-Cys-27. At Pro-4 the chain carries 4-hydroxyproline; partial. Glu-7 bears the 4-carboxyglutamate; partial mark. Pro-14 bears the 4-hydroxyproline; partial mark.

As to expression, expressed by the venom duct.

The protein resides in the secreted. Functionally, may inhibit sodium (Nav) or calcium channels (Cav). The chain is Conotoxin de7b from Conasprella delessertii (Sozon's cone).